We begin with the raw amino-acid sequence, 1279 residues long: MSSTKWTDEQRQAIFTKNCNLLVAAGAGAGKTAVLVQRIIEKILDKEEPIDIDKLLVVTFTNAAAAEMRERIGDAISKGLDEDPESKVLRKQLTLLNKSNIMTIHSFCLQVIKNNFHTIEIDPNFRICDETEGILMKQEAIDELFDELYEIENEDFINLVESYASRKDIRLQGVVLELHRFAKSAPFSYDWLLNMAEEFNVGEEFNFEETPWADMIMEDMKVLLHGFKNMLQKSIDVILNSEGIEYYYEPFKMDLNFINSLLEKLSFKEFRGEIIAYDFPKLPLKRNKDADKEAKERVKKLRDKVKKRIIELRITLNSYENEFTKKEFIFLYPSMKALSNLVILFDKKYEAKKRERDLIDFNDIEHLCLSILTDKDSKGHIIPSDIALDYRKKFAEVLIDEYQDSNLVQEVIMSMVSRVKGYWSFYNGQLMFNEEEINLEEPHIGLDIPNRFMVGDVKQSIYRFRQAKPEIFLDKYNEYSEEEGIKNRKVKLFKNFRSREEVINGVNYLFKQIMSKTIGELDYTEEEALKVGASYGEEVKGEPIELCLMDKKYEISEEVLKEYNVDEEEALDNIQLEGRLVAKKIQKLVGNNLEGGLKVFDKKLGEYRNLQYRDIVILMRATSNWAPVFVEELAKEGIPVFADTNSGYFDTAEIKTMISLLQIIDNPLQDIPLLSVLRSPIASFNDDELIDIRMVNKNIAFYECMEIIYRLYKNEKLDSYYSFYIKDENKINKIIKDMNEKLKNKICSFIEKLKLWREKSINIDIDEFIWFLYMETGYYGYAGALQAGEQRQANLRILFQRAKQYAKTSYKGLFNFINFINKLKFSSGDMGSAKILGENENVIRIMSIHKSKGLEFPVVILSGTGKNFNMTDLNKNILFHRDLGYGPDYVDTERRIAYPSLVKNIIKNKIRLETLSEEMRILYVALTRAREKLIITGLINNMDKAVESWLNLSDDKNKVPEYAVMNGKTYLDWIGPAIIKHKDAVSFREELKMSSELSNIVDDKSKWKIELWNKKELLKEKVEEDEVEISEKIKETLMNLGESNYKEEIYKRLSFKYKYDNASSIPTKLSVSDVKKQFILDEKENTEELFKKVELRKPMFMGEKKKISPSERGTIIHLFMQHLDLKKAENKEDIKEQINRLIEREFITYEQSKVINPYKILKFCRSELGKRMINSNNINREMPFSIEIPAVEIYRELDKNIYKDEKLIIQGIIDCYFEEEEGLVLLDYKTDYVNDIEEIKNRYEIQIKYYEEALNRITGKTVKDKYLYLFSVDNYIKID.

The UvrD-like helicase ATP-binding domain occupies 4–499 (TKWTDEQRQA…VKLFKNFRSR (496 aa)). 25-32 (AGAGAGKT) is an ATP binding site. Residues 526 to 853 (EEALKVGASY…RIMSIHKSKG (328 aa)) form the UvrD-like helicase C-terminal domain.

Belongs to the helicase family. AddA subfamily. As to quaternary structure, heterodimer of AddA and AddB/RexB. Mg(2+) serves as cofactor.

It catalyses the reaction Couples ATP hydrolysis with the unwinding of duplex DNA by translocating in the 3'-5' direction.. It carries out the reaction ATP + H2O = ADP + phosphate + H(+). Functionally, the heterodimer acts as both an ATP-dependent DNA helicase and an ATP-dependent, dual-direction single-stranded exonuclease. Recognizes the chi site generating a DNA molecule suitable for the initiation of homologous recombination. The AddA nuclease domain is required for chi fragment generation; this subunit has the helicase and 3' -&gt; 5' nuclease activities. The polypeptide is ATP-dependent helicase/nuclease subunit A (Clostridium botulinum (strain 657 / Type Ba4)).